The following is a 501-amino-acid chain: MPPAVGGPVGYTPPDGGWGWAVVIGAFISIGFSYAFPKSITVFFKEIEGIFNATTSEVSWISSIMLAVMYGGGPISSVLVNKYGSRPVMIVGGILSGSGLIAASFCNTVQELYFSVGVIGGLGLAFNLNPALTMIGKYFYKRRPLANGLAMAGSPVFLSTLAPLNQAFFMIYGWRGSFLILGGLLLNCCVAGALMRPIGPKPTTAEKEKSKGSLQEAGKYETKKGASDANTDLIGGNPKEEKKSIFQTLNTFLDLSLFKHRGFLLYLSGNVLMFFGLFTPLVFLSNYGKSKHYSSEKAAFLLSILAFVDMVARPSMGLVANTKWVRPRVQYFFAASIIANGLCHLAAPLSSTYIELCIYAGFFGFAFGWLSSVLFETLMDLVGPQRFSSAVGLVTIVECCPVLLGPPVLGRLNDIYGDYKYTYWACGIILIVAGIYLFIGMGINYRLLEKEQKAEKQQKKESKDEETNVDVAEKPKEVIDAAESPEHKATEEDPKEAESPV.

Topologically, residues 1 to 22 (MPPAVGGPVGYTPPDGGWGWAV) are cytoplasmic. Residues 23-44 (VIGAFISIGFSYAFPKSITVFF) form a helical membrane-spanning segment. Lys38 provides a ligand contact to (S)-lactate. The Extracellular segment spans residues 45-55 (KEIEGIFNATT). Residues 56–80 (SEVSWISSIMLAVMYGGGPISSVLV) traverse the membrane as a helical segment. Residues 81 to 84 (NKYG) lie on the Cytoplasmic side of the membrane. The helical transmembrane segment at 85–105 (SRPVMIVGGILSGSGLIAASF) threads the bilayer. Residues 106–109 (CNTV) are Extracellular-facing. Residues 110 to 132 (QELYFSVGVIGGLGLAFNLNPAL) form a helical membrane-spanning segment. Residues 133-146 (TMIGKYFYKRRPLA) are Cytoplasmic-facing. Residues 147–169 (NGLAMAGSPVFLSTLAPLNQAFF) form a helical membrane-spanning segment. Topologically, residues 170–174 (MIYGW) are extracellular. A helical transmembrane segment spans residues 175-194 (RGSFLILGGLLLNCCVAGAL). Residues 195–261 (MRPIGPKPTT…FLDLSLFKHR (67 aa)) are Cytoplasmic-facing. The disordered stretch occupies residues 201–236 (KPTTAEKEKSKGSLQEAGKYETKKGASDANTDLIGG). 3 positions are modified to phosphoserine: Ser210, Ser213, and Ser227. Residue Thr231 is modified to Phosphothreonine. A helical transmembrane segment spans residues 262–288 (GFLLYLSGNVLMFFGLFTPLVFLSNYG). The Extracellular segment spans residues 289–295 (KSKHYSS). Residues 296–317 (EKAAFLLSILAFVDMVARPSMG) form a helical membrane-spanning segment. Residue Asp309 coordinates H(+). Arg313 provides a ligand contact to (S)-lactate. Topologically, residues 318-328 (LVANTKWVRPR) are cytoplasmic. The helical transmembrane segment at 329–349 (VQYFFAASIIANGLCHLAAPL) threads the bilayer. Residues 350-353 (SSTY) are Extracellular-facing. A helical membrane pass occupies residues 354–375 (IELCIYAGFFGFAFGWLSSVLF). The Cytoplasmic segment spans residues 376–389 (ETLMDLVGPQRFSS). A helical transmembrane segment spans residues 390-410 (AVGLVTIVECCPVLLGPPVLG). Over 411–421 (RLNDIYGDYKY) the chain is Extracellular. Residues 422–443 (TYWACGIILIVAGIYLFIGMGI) form a helical membrane-spanning segment. The Cytoplasmic portion of the chain corresponds to 444 to 501 (NYRLLEKEQKAEKQQKKESKDEETNVDVAEKPKEVIDAAESPEHKATEEDPKEAESPV). The interval 454–501 (AEKQQKKESKDEETNVDVAEKPKEVIDAAESPEHKATEEDPKEAESPV) is disordered. Ser462 carries the post-translational modification Phosphoserine. Phosphothreonine is present on Thr467. Phosphoserine occurs at positions 484 and 499.

The protein belongs to the major facilitator superfamily. Monocarboxylate porter (TC 2.A.1.13) family. Interacts with BSG; interaction mediates SLC16A1 targeting to the plasma membrane. Interacts with EMB; interaction mediates SLC16A1 targeting to the plasma membrane.

The protein resides in the cell membrane. The protein localises to the basolateral cell membrane. Its subcellular location is the apical cell membrane. It catalyses the reaction (S)-lactate(in) + H(+)(in) = (S)-lactate(out) + H(+)(out). It carries out the reaction acetate(out) + H(+)(out) = acetate(in) + H(+)(in). The catalysed reaction is acetoacetate(out) + H(+)(out) = acetoacetate(in) + H(+)(in). The enzyme catalyses pyruvate(out) + H(+)(out) = pyruvate(in) + H(+)(in). It catalyses the reaction (R)-3-hydroxybutanoate(out) + H(+)(out) = (R)-3-hydroxybutanoate(in) + H(+)(in). It carries out the reaction 3-methyl-2-oxobutanoate(out) + H(+)(out) = 3-methyl-2-oxobutanoate(in) + H(+)(in). The catalysed reaction is 4-methyl-2-oxopentanoate(out) + H(+)(out) = 4-methyl-2-oxopentanoate(in) + H(+)(in). The enzyme catalyses succinate(in) + 2 H(+)(in) = succinate(out) + 2 H(+)(out). Its function is as follows. Bidirectional proton-coupled monocarboxylate transporter. Catalyzes the rapid transport across the plasma membrane of many monocarboxylates such as lactate, pyruvate, acetate and the ketone bodies acetoacetate and beta-hydroxybutyrate, and thus contributes to the maintenance of intracellular pH. The transport direction is determined by the proton motive force and the concentration gradient of the substrate monocarboxylate. MCT1 is a major lactate exporter. Plays a role in cellular responses to a high-fat diet by modulating the cellular levels of lactate and pyruvate that contribute to the regulation of central metabolic pathways and insulin secretion, with concomitant effects on plasma insulin levels and blood glucose homeostasis. Facilitates the protonated monocarboxylate form of succinate export, that its transient protonation upon muscle cell acidification in exercising muscle and ischemic heart. Functions via alternate outward- and inward-open conformation states. Protonation and deprotonation of 309-Asp is essential for the conformational transition. In Bos taurus (Bovine), this protein is Monocarboxylate transporter 1 (SLC16A1).